Consider the following 529-residue polypeptide: MSPSEYAREVSKRRTFAIISHPDAGKTTITEKVLLFGQAIQTAGTVKGRGSNQHAKSDWMEMEKQRGISITTSVMQFPYRECLVNLLDTPGHEDFSEDTYRTLTAVDCCLMVIDAAKGVEDRTRKLMEVTRLRDTPILTFMNKLDRDIRDPMEVLDEVESELKIACAPITWPIGCGKLFKGVYHLYKDETYLYQTGKGHTIQEVRIVKGLDNPELDTAVGEELAAQLREELELVKGASHEFELDAFLAGELTPVFFGTALGNFGVDHMLDGLVAWAPAPMPRKTDTREVTAAEEKFTGFVFKIQANMDPKHRDRVAFMRVVSGRYEKSMKLRQVRTGKDVVISDALTFMAGDRSHIEEAYPGDIIGLHNHGTIQIGDTFTQGEDMKFTGIPNFAPELFRRIRLRDPLKQKQLLKGLVQLSEEGAVQVFRPLTNNDLIVGAVGVLQFDVVVARLKTEYNVEAIYESVNVSTARWVECSDVKKFEEFKRKNELHLALDGGDNLAYVAPTMVNLNLTRERYPEVTFHQTREH.

One can recognise a tr-type G domain in the interval 11 to 280 (SKRRTFAIIS…GLVAWAPAPM (270 aa)). Residues 20-27 (SHPDAGKT), 88-92 (DTPGH), and 142-145 (NKLD) contribute to the GTP site.

Belongs to the TRAFAC class translation factor GTPase superfamily. Classic translation factor GTPase family. PrfC subfamily.

It is found in the cytoplasm. In terms of biological role, increases the formation of ribosomal termination complexes and stimulates activities of RF-1 and RF-2. It binds guanine nucleotides and has strong preference for UGA stop codons. It may interact directly with the ribosome. The stimulation of RF-1 and RF-2 is significantly reduced by GTP and GDP, but not by GMP. This is Peptide chain release factor 3 from Pectobacterium carotovorum subsp. carotovorum (strain PC1).